Consider the following 220-residue polypeptide: Phosphoserine phosphatase (220 aa).

The active-site Nucleophile is the D11. Residues D11 and D13 each contribute to the Mg(2+) site. The Proton donor role is filled by D13. Substrate contacts are provided by residues E20, R56, 99-100 (SG), and K144. Residue D167 participates in Mg(2+) binding. N170 contributes to the substrate binding site.

The protein belongs to the HAD-like hydrolase superfamily. SerB family. Requires Mg(2+) as cofactor.

It catalyses the reaction O-phospho-L-serine + H2O = L-serine + phosphate. The catalysed reaction is O-phospho-D-serine + H2O = D-serine + phosphate. It functions in the pathway amino-acid biosynthesis; L-serine biosynthesis; L-serine from 3-phospho-D-glycerate: step 3/3. In Idiomarina loihiensis (strain ATCC BAA-735 / DSM 15497 / L2-TR), this protein is Phosphoserine phosphatase.